We begin with the raw amino-acid sequence, 257 residues long: Large ribosomal subunit protein uL3 (257 aa).

N5-methylglutamine is present on Gln-151. Positions 218–257 (YPASIKSAANTNTAPADAPVETPAEEAVVDTAATDGAQES) are disordered. Residues 225–236 (AANTNTAPADAP) are compositionally biased toward low complexity.

This sequence belongs to the universal ribosomal protein uL3 family. In terms of assembly, part of the 50S ribosomal subunit. Forms a cluster with proteins L14 and L19. Methylated by PrmB.

In terms of biological role, one of the primary rRNA binding proteins, it binds directly near the 3'-end of the 23S rRNA, where it nucleates assembly of the 50S subunit. The chain is Large ribosomal subunit protein uL3 from Sphingopyxis alaskensis (strain DSM 13593 / LMG 18877 / RB2256) (Sphingomonas alaskensis).